A 53-amino-acid chain; its full sequence is UPF0391 membrane protein KPK_4780 (53 aa).

A run of 2 helical transmembrane segments spans residues 4-24 (WGII…GGLA) and 30-47 (AAKI…VSLF).

The protein belongs to the UPF0391 family.

The protein resides in the cell membrane. The sequence is that of UPF0391 membrane protein KPK_4780 from Klebsiella pneumoniae (strain 342).